The following is a 281-amino-acid chain: sn-glycerol-3-phosphate transport system permease protein UgpE (281 aa).

Transmembrane regions (helical) follow at residues 16–36, 85–105, 113–133, 142–162, 202–222, and 247–267; these read LILGIAVILFPLYVAFVAATL, FSITVGKITVSMLSAFAIVWF, FFWMIFITLMLPVEVRIFPTV, LNSYAGLTLPLMASATATFLF, ALFVITFIYGWNQYLWPLLII, and WNQVMAAMLLTLIPPVVIVLA. Residues 77–268 form the ABC transmembrane type-1 domain; sequence MLNSFIMAFS…IPPVVIVLAM (192 aa).

Belongs to the binding-protein-dependent transport system permease family. UgpAE subfamily. In terms of assembly, the complex is composed of two ATP-binding proteins (UgpC), two transmembrane proteins (UgpA and UgpE) and a solute-binding protein (UgpB).

The protein resides in the cell inner membrane. Functionally, part of the ABC transporter complex UgpBAEC involved in sn-glycerol-3-phosphate (G3P) import. Probably responsible for the translocation of the substrate across the membrane. The chain is sn-glycerol-3-phosphate transport system permease protein UgpE (ugpE) from Salmonella typhi.